A 354-amino-acid polypeptide reads, in one-letter code: Holliday junction branch migration complex subunit RuvB (354 aa).

Positions 1-22 are disordered; the sequence is MTIQTDDFAPAPPRVVSAAPAS. A large ATPase domain (RuvB-L) region spans residues 5-193; it reads TDDFAPAPPR…FGIVARLEFY (189 aa). ATP-binding positions include Leu32, Arg33, Gly74, Lys77, Thr78, Thr79, 140–142, Arg183, Tyr193, and Arg230; that span reads EDY. Thr78 is a Mg(2+) binding site. Residues 194–264 form a small ATPAse domain (RuvB-S) region; sequence TPEELALIVR…IAHKALVMLD (71 aa). Positions 267–354 are head domain (RuvB-H); the sequence is PQGFDLMDRK…RSDGQDLFGI (88 aa). DNA-binding residues include Arg303, Arg322, and Arg327.

It belongs to the RuvB family. Homohexamer. Forms an RuvA(8)-RuvB(12)-Holliday junction (HJ) complex. HJ DNA is sandwiched between 2 RuvA tetramers; dsDNA enters through RuvA and exits via RuvB. An RuvB hexamer assembles on each DNA strand where it exits the tetramer. Each RuvB hexamer is contacted by two RuvA subunits (via domain III) on 2 adjacent RuvB subunits; this complex drives branch migration. In the full resolvosome a probable DNA-RuvA(4)-RuvB(12)-RuvC(2) complex forms which resolves the HJ.

The protein resides in the cytoplasm. The enzyme catalyses ATP + H2O = ADP + phosphate + H(+). In terms of biological role, the RuvA-RuvB-RuvC complex processes Holliday junction (HJ) DNA during genetic recombination and DNA repair, while the RuvA-RuvB complex plays an important role in the rescue of blocked DNA replication forks via replication fork reversal (RFR). RuvA specifically binds to HJ cruciform DNA, conferring on it an open structure. The RuvB hexamer acts as an ATP-dependent pump, pulling dsDNA into and through the RuvAB complex. RuvB forms 2 homohexamers on either side of HJ DNA bound by 1 or 2 RuvA tetramers; 4 subunits per hexamer contact DNA at a time. Coordinated motions by a converter formed by DNA-disengaged RuvB subunits stimulates ATP hydrolysis and nucleotide exchange. Immobilization of the converter enables RuvB to convert the ATP-contained energy into a lever motion, pulling 2 nucleotides of DNA out of the RuvA tetramer per ATP hydrolyzed, thus driving DNA branch migration. The RuvB motors rotate together with the DNA substrate, which together with the progressing nucleotide cycle form the mechanistic basis for DNA recombination by continuous HJ branch migration. Branch migration allows RuvC to scan DNA until it finds its consensus sequence, where it cleaves and resolves cruciform DNA. In Variovorax paradoxus (strain S110), this protein is Holliday junction branch migration complex subunit RuvB.